The following is a 149-amino-acid chain: Endoribonuclease YbeY (149 aa).

Positions 112, 116, and 122 each coordinate Zn(2+).

It belongs to the endoribonuclease YbeY family. Zn(2+) is required as a cofactor.

It localises to the cytoplasm. Its function is as follows. Single strand-specific metallo-endoribonuclease involved in late-stage 70S ribosome quality control and in maturation of the 3' terminus of the 16S rRNA. The sequence is that of Endoribonuclease YbeY from Methylibium petroleiphilum (strain ATCC BAA-1232 / LMG 22953 / PM1).